A 90-amino-acid polypeptide reads, in one-letter code: Acylphosphatase (90 aa).

One can recognise an Acylphosphatase-like domain in the interval 3–90; it reads QYRIIVDGRV…DGFQKFNISY (88 aa). Catalysis depends on residues Arg18 and Asn36.

This sequence belongs to the acylphosphatase family.

The enzyme catalyses an acyl phosphate + H2O = a carboxylate + phosphate + H(+). In Bacillus licheniformis (strain ATCC 14580 / DSM 13 / JCM 2505 / CCUG 7422 / NBRC 12200 / NCIMB 9375 / NCTC 10341 / NRRL NRS-1264 / Gibson 46), this protein is Acylphosphatase (acyP).